Here is a 287-residue protein sequence, read N- to C-terminus: MAIRKFKPYTPGTRQRVVTDFSEITSAKPERSLIVSKHRVKGRNNRGVITCRHRGGGHKRQYRLVDFRRDKRNINAKVAAIHYDPHRNARLALLFYEDGEKRYIIAPAGVKVGQNVISGESVPIEDGNAMPLSVMPLGSSVHCVELYAGRGAQMVRSAGASAQVMAKEGDYVALKLPSTEVRLVRKECYATLGEVGNSEIRNTSLGKAGRRRWLGRRPQVRGSVMNPCDHPHGGGEGKAPIGRAGPVTPWGKPALGLKTRKKNKPSNKLVVRRRRRISKRSRGGRDS.

A disordered region spans residues 221-287; that stretch reads RGSVMNPCDH…SKRSRGGRDS (67 aa). Residues 258–287 are compositionally biased toward basic residues; sequence KTRKKNKPSNKLVVRRRRRISKRSRGGRDS.

It belongs to the universal ribosomal protein uL2 family. Part of the 50S ribosomal subunit. Forms a bridge to the 30S subunit in the 70S ribosome.

Functionally, one of the primary rRNA binding proteins. Required for association of the 30S and 50S subunits to form the 70S ribosome, for tRNA binding and peptide bond formation. It has been suggested to have peptidyltransferase activity; this is somewhat controversial. Makes several contacts with the 16S rRNA in the 70S ribosome. In Prochlorococcus marinus (strain MIT 9312), this protein is Large ribosomal subunit protein uL2.